Reading from the N-terminus, the 20-residue chain is Poneritoxin (20 aa).

Methionine 18 bears the Methionine sulfoxide; in form U1-PONTX-Dq3c mark. Position 19 is a lysine amide; in form U1-PONTX-Dq3a and U1-PONTX-Dq3c (lysine 19).

Post-translationally, the peptide spanning residues 2 to 19 occurs in 3 forms and has been given 3 different names. U1-PONTX-Dq3a has an amidated Lys-19, U1-PONTX-Dq3c has an amidated Lys-19 and an oxidized Met-18, and U1-PONTX-Dq3b has no modifications at either Met-18 or Lys-19. In terms of tissue distribution, expressed by the venom gland.

Its subcellular location is the secreted. In terms of biological role, may have antimicrobial properties, like most ant linear peptides. In Dinoponera quadriceps (South American ant), this protein is Poneritoxin.